Consider the following 247-residue polypeptide: Probable transcriptional regulatory protein LBF_0056 (247 aa).

It belongs to the TACO1 family.

Its subcellular location is the cytoplasm. This chain is Probable transcriptional regulatory protein LBF_0056, found in Leptospira biflexa serovar Patoc (strain Patoc 1 / Ames).